A 35-amino-acid chain; its full sequence is Hemocyanin A chain (35 aa).

The protein belongs to the tyrosinase family. Hemocyanin subfamily. In terms of tissue distribution, hemolymph.

The protein resides in the secreted. It localises to the extracellular space. Functionally, hemocyanins are copper-containing oxygen carriers occurring freely dissolved in the hemolymph of many mollusks and arthropods. The protein is Hemocyanin A chain of Cherax destructor (Common yabby crayfish).